The sequence spans 455 residues: Asparagine--tRNA ligase (455 aa).

This sequence belongs to the class-II aminoacyl-tRNA synthetase family. Homodimer.

The protein resides in the cytoplasm. The enzyme catalyses tRNA(Asn) + L-asparagine + ATP = L-asparaginyl-tRNA(Asn) + AMP + diphosphate + H(+). In Mycoplasma pneumoniae (strain ATCC 29342 / M129 / Subtype 1) (Mycoplasmoides pneumoniae), this protein is Asparagine--tRNA ligase.